The primary structure comprises 109 residues: Fluoride-specific ion channel FluC (109 aa).

3 consecutive transmembrane segments (helical) span residues 21–41, 52–72, and 84–104; these read LTLN…GFFV, ILFS…YFLY, and IIFF…GFWI.

Belongs to the fluoride channel Fluc/FEX (TC 1.A.43) family.

Its subcellular location is the cell inner membrane. The enzyme catalyses fluoride(in) = fluoride(out). Functionally, fluoride-specific ion channel. Important for reducing fluoride concentration in the cell, thus reducing its toxicity. This is Fluoride-specific ion channel FluC from Prochlorococcus marinus (strain MIT 9301).